Consider the following 209-residue polypeptide: Redox-sensing transcriptional repressor Rex (209 aa).

Positions 16-55 form a DNA-binding region, H-T-H motif; sequence LYYRFIQNLSLSGKQRVSSAELSEAVKVDSATIRRDFSYF. 90–95 contacts NAD(+); that stretch reads GVGNLG.

It belongs to the transcriptional regulatory Rex family. Homodimer.

The protein resides in the cytoplasm. Functionally, modulates transcription in response to changes in cellular NADH/NAD(+) redox state. The protein is Redox-sensing transcriptional repressor Rex of Bacillus cereus (strain Q1).